A 348-amino-acid chain; its full sequence is Ion-translocating oxidoreductase complex subunit D (348 aa).

Helical transmembrane passes span 19-39, 41-61, 66-86, 87-107, and 122-142; these read FMLW…AFFG, GVVI…IVVA, KSTT…ILAM, AIPP…ALLL, and PAMV…TSWL. Threonine 186 is subject to FMN phosphoryl threonine. The next 5 membrane-spanning stretches (helical) occupy residues 212–232, 236–256, 265–285, 291–311, and 315–335; these read IFAR…LFLL, IIHW…SALT, LNVL…FIAT, SITP…AYLI, and GSYP…VPLI.

This sequence belongs to the NqrB/RnfD family. As to quaternary structure, the complex is composed of six subunits: RnfA, RnfB, RnfC, RnfD, RnfE and RnfG. FMN is required as a cofactor.

The protein localises to the cell inner membrane. In terms of biological role, part of a membrane-bound complex that couples electron transfer with translocation of ions across the membrane. The protein is Ion-translocating oxidoreductase complex subunit D of Haemophilus ducreyi (strain 35000HP / ATCC 700724).